A 102-amino-acid polypeptide reads, in one-letter code: Glutaredoxin 1 (102 aa).

The region spanning 1 to 96 is the Glutaredoxin domain; it reads MNKAILHTII…KLLENQPKTT (96 aa). Residues cysteine 17 and cysteine 20 are joined by a disulfide bond.

It belongs to the glutaredoxin family. As to quaternary structure, monomer.

The protein resides in the cytoplasm. In terms of biological role, has a glutathione-disulfide oxidoreductase activity in the presence of NADPH and glutathione reductase. Reduces low molecular weight disulfides and proteins. The protein is Glutaredoxin 1 (grxC1) of Rickettsia conorii (strain ATCC VR-613 / Malish 7).